Reading from the N-terminus, the 296-residue chain is Cytidine deaminase (296 aa).

2 consecutive CMP/dCMP-type deaminase domains span residues 47–167 and 186–296; these read TEAE…FGPK and DSSD…VDPV. Residue 88–90 participates in substrate binding; that stretch reads NLE. Position 101 (histidine 101) interacts with Zn(2+). The Proton donor role is filled by glutamate 103. Zn(2+)-binding residues include cysteine 128 and cysteine 131.

The protein belongs to the cytidine and deoxycytidylate deaminase family. As to quaternary structure, homodimer. Requires Zn(2+) as cofactor.

The catalysed reaction is cytidine + H2O + H(+) = uridine + NH4(+). It catalyses the reaction 2'-deoxycytidine + H2O + H(+) = 2'-deoxyuridine + NH4(+). Functionally, this enzyme scavenges exogenous and endogenous cytidine and 2'-deoxycytidine for UMP synthesis. The protein is Cytidine deaminase of Shewanella sp. (strain W3-18-1).